The primary structure comprises 1414 residues: DNA-directed RNA polymerase subunit beta' (1414 aa).

Positions 70, 72, 85, and 88 each coordinate Zn(2+). Mg(2+)-binding residues include Asp460, Asp462, and Asp464. Positions 815, 889, 896, and 899 each coordinate Zn(2+). A disordered region spans residues 1395–1414 (EAEAQFADVSSTPDSDTDAS).

The protein belongs to the RNA polymerase beta' chain family. As to quaternary structure, the RNAP catalytic core consists of 2 alpha, 1 beta, 1 beta' and 1 omega subunit. When a sigma factor is associated with the core the holoenzyme is formed, which can initiate transcription. Mg(2+) serves as cofactor. It depends on Zn(2+) as a cofactor.

The catalysed reaction is RNA(n) + a ribonucleoside 5'-triphosphate = RNA(n+1) + diphosphate. Its function is as follows. DNA-dependent RNA polymerase catalyzes the transcription of DNA into RNA using the four ribonucleoside triphosphates as substrates. This Janthinobacterium sp. (strain Marseille) (Minibacterium massiliensis) protein is DNA-directed RNA polymerase subunit beta'.